The chain runs to 82 residues: uncharacterized protein (82 aa).

This is an uncharacterized protein from Human herpesvirus 6A (strain Uganda-1102) (HHV-6 variant A).